The primary structure comprises 148 residues: Large ribosomal subunit protein uL15 (148 aa).

The disordered stretch occupies residues 1–50 (MNLSNLKPAEGSTKTRKRIGRGPGSGLGGTSTRGHKGAKSRSGYSKKIGF). Gly residues predominate over residues 21–31 (RGPGSGLGGTS).

Belongs to the universal ribosomal protein uL15 family. As to quaternary structure, part of the 50S ribosomal subunit.

Its function is as follows. Binds to the 23S rRNA. The chain is Large ribosomal subunit protein uL15 from Bacteroides fragilis (strain ATCC 25285 / DSM 2151 / CCUG 4856 / JCM 11019 / LMG 10263 / NCTC 9343 / Onslow / VPI 2553 / EN-2).